Here is a 390-residue protein sequence, read N- to C-terminus: 2-oxoisovalerate dehydrogenase subunit beta, mitochondrial (390 aa).

A mitochondrion-targeting transit peptide spans 1–48 (MAAVAARAGGLLWLRAAGAERRRCGLRCAALVQGFLQPGGEDTAQKRR). Tyrosine 150 contacts thiamine diphosphate. K(+) contacts are provided by glycine 176, leucine 178, threonine 179, cysteine 226, and aspartate 229. Position 230 is an N6-acetyllysine (lysine 230). Asparagine 231 lines the K(+) pocket. Lysine 239 carries the post-translational modification N6-acetyllysine.

Heterotetramer of 2 alpha/BCKDHA and 2 beta chains/BCKDHB that forms the branched-chain alpha-keto acid decarboxylase (E1) component of the BCKD complex. The branched-chain alpha-ketoacid dehydrogenase is a large complex composed of three major building blocks E1, E2 and E3. It is organized around E2, a 24-meric cubic core composed of DBT, to which are associated 6 to 12 copies of E1, and approximately 6 copies of the dehydrogenase E3, a DLD dimer. It depends on thiamine diphosphate as a cofactor.

Its subcellular location is the mitochondrion matrix. The catalysed reaction is N(6)-[(R)-lipoyl]-L-lysyl-[protein] + 3-methyl-2-oxobutanoate + H(+) = N(6)-[(R)-S(8)-2-methylpropanoyldihydrolipoyl]-L-lysyl-[protein] + CO2. In terms of biological role, together with BCKDHA forms the heterotetrameric E1 subunit of the mitochondrial branched-chain alpha-ketoacid dehydrogenase (BCKD) complex. The BCKD complex catalyzes the multi-step oxidative decarboxylation of alpha-ketoacids derived from the branched-chain amino-acids valine, leucine and isoleucine producing CO2 and acyl-CoA which is subsequently utilized to produce energy. The E1 subunit catalyzes the first step with the decarboxylation of the alpha-ketoacid forming an enzyme-product intermediate. A reductive acylation mediated by the lipoylamide cofactor of E2 extracts the acyl group from the E1 active site for the next step of the reaction. This chain is 2-oxoisovalerate dehydrogenase subunit beta, mitochondrial, found in Mus musculus (Mouse).